The following is a 388-amino-acid chain: MRYLTAGESHGQALTAIIEGIPAGLALSAELINKELKRRQGGYGRGARMRIESDRVHISSGVRHGKTTGAPITLTIQNKDHQKWLDIMAVEAVEEQIKFKRKITRPRPGHADLVGGIKYRFDDLRNALERSSARETAMRVAVGAIAKAVLTELGIETANHVLVFGGIEVAVPEAMPFTDIKKAAEASDLSIVNPKQEATIKAHIDQVKKEGDTLGGIIETIIYGLPAGLGSYVQWDRKLDAKIAQTVLSINAFKGVEFGMGFDMGYQKGSQVMDDIIWHETSGYSRRTNRLGGFEAGMTTGQPIVVKGVMKPIPTLYKPLMSVDTETHEPYKATVERSDPTALPAAGVVMENVVATVITKEILEQFPSDNMTDLKQAFFAYRDYVHHF.

Residues arginine 39 and arginine 45 each coordinate NADP(+). Residues 130–132, 251–252, alanine 296, 311–315, and arginine 337 contribute to the FMN site; these read RSS, NA, and KPIPT.

The protein belongs to the chorismate synthase family. In terms of assembly, homotetramer. Requires FMNH2 as cofactor.

The enzyme catalyses 5-O-(1-carboxyvinyl)-3-phosphoshikimate = chorismate + phosphate. The protein operates within metabolic intermediate biosynthesis; chorismate biosynthesis; chorismate from D-erythrose 4-phosphate and phosphoenolpyruvate: step 7/7. In terms of biological role, catalyzes the anti-1,4-elimination of the C-3 phosphate and the C-6 proR hydrogen from 5-enolpyruvylshikimate-3-phosphate (EPSP) to yield chorismate, which is the branch point compound that serves as the starting substrate for the three terminal pathways of aromatic amino acid biosynthesis. This reaction introduces a second double bond into the aromatic ring system. The polypeptide is Chorismate synthase (Streptococcus equi subsp. zooepidemicus (strain MGCS10565)).